Reading from the N-terminus, the 215-residue chain is Cytochrome c biogenesis ATP-binding export protein CcmA (215 aa).

The ABC transporter domain maps to 3-211 (LTAEILAARR…KMTGFAGVDN (209 aa)). 35–42 (GKNGSGKS) serves as a coordination point for ATP.

Belongs to the ABC transporter superfamily. CcmA exporter (TC 3.A.1.107) family. The complex is composed of two ATP-binding proteins (CcmA) and two transmembrane proteins (CcmB).

The protein resides in the cell inner membrane. The catalysed reaction is heme b(in) + ATP + H2O = heme b(out) + ADP + phosphate + H(+). Its function is as follows. Part of the ABC transporter complex CcmAB involved in the biogenesis of c-type cytochromes; once thought to export heme, this seems not to be the case, but its exact role is uncertain. Responsible for energy coupling to the transport system. In Rhizobium johnstonii (strain DSM 114642 / LMG 32736 / 3841) (Rhizobium leguminosarum bv. viciae), this protein is Cytochrome c biogenesis ATP-binding export protein CcmA.